Here is a 272-residue protein sequence, read N- to C-terminus: Putative phosphoenolpyruvate synthase regulatory protein (272 aa).

152 to 159 (GVSRCGKT) serves as a coordination point for ADP.

This sequence belongs to the pyruvate, phosphate/water dikinase regulatory protein family. PSRP subfamily.

It catalyses the reaction [pyruvate, water dikinase] + ADP = [pyruvate, water dikinase]-phosphate + AMP + H(+). The catalysed reaction is [pyruvate, water dikinase]-phosphate + phosphate + H(+) = [pyruvate, water dikinase] + diphosphate. Bifunctional serine/threonine kinase and phosphorylase involved in the regulation of the phosphoenolpyruvate synthase (PEPS) by catalyzing its phosphorylation/dephosphorylation. The protein is Putative phosphoenolpyruvate synthase regulatory protein of Pseudomonas fluorescens (strain ATCC BAA-477 / NRRL B-23932 / Pf-5).